Here is a 294-residue protein sequence, read N- to C-terminus: Acetyl-coenzyme A carboxylase carboxyl transferase subunit beta (294 aa).

The CoA carboxyltransferase N-terminal domain maps to 30–294 (IMTKCPECKK…PEAGGESDGE (265 aa)). 4 residues coordinate Zn(2+): Cys-34, Cys-37, Cys-53, and Cys-56. The segment at 34–56 (CPECKKIMYTKELQKNLMVCNYC) adopts a C4-type zinc-finger fold.

Belongs to the AccD/PCCB family. As to quaternary structure, acetyl-CoA carboxylase is a heterohexamer composed of biotin carboxyl carrier protein (AccB), biotin carboxylase (AccC) and two subunits each of ACCase subunit alpha (AccA) and ACCase subunit beta (AccD). Zn(2+) serves as cofactor.

Its subcellular location is the cytoplasm. It catalyses the reaction N(6)-carboxybiotinyl-L-lysyl-[protein] + acetyl-CoA = N(6)-biotinyl-L-lysyl-[protein] + malonyl-CoA. The protein operates within lipid metabolism; malonyl-CoA biosynthesis; malonyl-CoA from acetyl-CoA: step 1/1. In terms of biological role, component of the acetyl coenzyme A carboxylase (ACC) complex. Biotin carboxylase (BC) catalyzes the carboxylation of biotin on its carrier protein (BCCP) and then the CO(2) group is transferred by the transcarboxylase to acetyl-CoA to form malonyl-CoA. The protein is Acetyl-coenzyme A carboxylase carboxyl transferase subunit beta of Listeria innocua serovar 6a (strain ATCC BAA-680 / CLIP 11262).